A 343-amino-acid polypeptide reads, in one-letter code: Outer envelope pore protein 37, chloroplastic (343 aa).

Composition is skewed to polar residues over residues 1–11 and 23–43; these read MADPSSQNPNL and THQIQSGTSELSPPSRPPCST. Residues 1–43 are disordered; sequence MADPSSQNPNLATPPPPSSPSPTHQIQSGTSELSPPSRPPCST. Residues 1–73 constitute a chloroplast transit peptide; sequence MADPSSQNPN…DSLLFLNKVS (73 aa). The Cytoplasmic segment spans residues 74 to 76; the sequence is CKL. The beta stranded transmembrane segment at 77 to 86 threads the bilayer; sequence FDNLAKLKLS. The Chloroplast intermembrane segment spans residues 87 to 103; that stretch reads FQNNSQREISQPQVSFT. Residues 104–113 traverse the membrane as a beta stranded segment; sequence SKHVSVLYDV. Topologically, residues 114 to 129 are cytoplasmic; the sequence is EEKNTFIKSTLDVHPR. The beta stranded transmembrane segment at 130–137 threads the bilayer; it reads LQLRALHN. Residues 138-154 lie on the Chloroplast intermembrane side of the membrane; sequence VKAQQGEVAMEANLTEP. A beta stranded transmembrane segment spans residues 155–164; the sequence is GYSLELSSPV. Topologically, residues 165-169 are cytoplasmic; sequence PIGYP. The chain crosses the membrane as a beta stranded span at residues 170-178; that stretch reads RATLKFPLG. The Chloroplast intermembrane segment spans residues 179–219; that stretch reads EISLQEKDEEEEEKQKRTLSVNGILKRQVMNGVCTALYTDE. A beta stranded transmembrane segment spans residues 220-228; sequence ELRLRYAYK. The Cytoplasmic portion of the chain corresponds to 229 to 230; the sequence is DD. A beta stranded membrane pass occupies residues 231-240; it reads ALSFIPSISL. Residue Pro-241 is a topological domain, chloroplast intermembrane. Residues 242 to 250 form a beta stranded membrane-spanning segment; sequence SNAASFAFK. The Cytoplasmic segment spans residues 251–257; sequence RRFSPSD. The chain crosses the membrane as a beta stranded span at residues 258–267; sequence KLSYWYNFDS. At 268–269 the chain is on the chloroplast intermembrane side; sequence NM. Residues 270-279 form a beta stranded membrane-spanning segment; the sequence is WSAVYKRTYG. The Cytoplasmic portion of the chain corresponds to 280 to 286; it reads KDYKLKA. Residues 287–296 form a beta stranded membrane-spanning segment; the sequence is GYDSDVRLGW. Topologically, residues 297-316 are chloroplast intermembrane; that stretch reads ASLWVGDEAGKVKTTPMKMK. The chain crosses the membrane as a beta stranded span at residues 317–326; it reads VQFMLQVPQD. Residues 327–343 are Cytoplasmic-facing; it reads DIKSSVLMFRVKKRWDI.

It belongs to the plastid outer envelope porin OEP37 (TC 1.B.47) family. Forms an hourglass-shaped multimeric complex. In terms of tissue distribution, ubiquitously expressed at low levels. Mostly present in cotyledons, and accumulates in seedlings and embryos.

The protein localises to the plastid. It localises to the chloroplast outer membrane. Its function is as follows. Voltage-dependent peptide-sensitive high conductance rectifying cation channel with a strong affinity for TIC32 that is imported into the chloroplast. Conductance is pH-dependent decreasing with decreasing pH values. The polypeptide is Outer envelope pore protein 37, chloroplastic (OEP37) (Arabidopsis thaliana (Mouse-ear cress)).